A 139-amino-acid chain; its full sequence is Glutamate mutase sigma subunit (139 aa).

In terms of domain architecture, B12-binding spans 4 to 139 (KIKLVLGVIG…DLHADFPDHA (136 aa)). Adenosylcob(III)alamin is bound by residues 14–18 (SDCHA), histidine 17, 62–64 (SSL), and 94–98 (NIVVG).

Belongs to the methylaspartate mutase GlmS subunit family. Heterotetramer composed of 2 epsilon subunits (GlmE) and 2 sigma subunits (GlmS). GlmE exists as a homodimer and GlmS as a monomer. Adenosylcob(III)alamin is required as a cofactor.

It catalyses the reaction (2S,3S)-3-methyl-L-aspartate = L-glutamate. Its pathway is amino-acid degradation; L-glutamate degradation via mesaconate pathway; acetate and pyruvate from L-glutamate: step 1/4. Its function is as follows. Catalyzes the carbon skeleton rearrangement of L-glutamate to L-threo-3-methylaspartate ((2S,3S)-3-methylaspartate). The protein is Glutamate mutase sigma subunit of Treponema denticola (strain ATCC 35405 / DSM 14222 / CIP 103919 / JCM 8153 / KCTC 15104).